Here is a 290-residue protein sequence, read N- to C-terminus: Acetyl-coenzyme A carboxylase carboxyl transferase subunit beta (290 aa).

Positions 29–290 constitute a CoA carboxyltransferase N-terminal domain; sequence LWGKCPECSQ…RLHGYREKRK (262 aa). Zn(2+)-binding residues include C33, C36, C52, and C55. The segment at 33–55 adopts a C4-type zinc-finger fold; that stretch reads CPECSQVVYRKDLLENANVCSNC.

The protein belongs to the AccD/PCCB family. Acetyl-CoA carboxylase is a heterohexamer composed of biotin carboxyl carrier protein (AccB), biotin carboxylase (AccC) and two subunits each of ACCase subunit alpha (AccA) and ACCase subunit beta (AccD). Zn(2+) is required as a cofactor.

It is found in the cytoplasm. The catalysed reaction is N(6)-carboxybiotinyl-L-lysyl-[protein] + acetyl-CoA = N(6)-biotinyl-L-lysyl-[protein] + malonyl-CoA. Its pathway is lipid metabolism; malonyl-CoA biosynthesis; malonyl-CoA from acetyl-CoA: step 1/1. In terms of biological role, component of the acetyl coenzyme A carboxylase (ACC) complex. Biotin carboxylase (BC) catalyzes the carboxylation of biotin on its carrier protein (BCCP) and then the CO(2) group is transferred by the transcarboxylase to acetyl-CoA to form malonyl-CoA. The chain is Acetyl-coenzyme A carboxylase carboxyl transferase subunit beta from Prochlorococcus marinus (strain MIT 9211).